The following is a 315-amino-acid chain: Ribose-phosphate pyrophosphokinase (315 aa).

ATP-binding positions include 37-39 and 96-97; these read DSE and RQ. Mg(2+) is bound by residues His131 and Asp170. Residue Lys194 is part of the active site. D-ribose 5-phosphate-binding positions include Arg196, Asp220, and 224–228; that span reads DTGGT.

This sequence belongs to the ribose-phosphate pyrophosphokinase family. Class I subfamily. In terms of assembly, homohexamer. The cofactor is Mg(2+).

The protein resides in the cytoplasm. The catalysed reaction is D-ribose 5-phosphate + ATP = 5-phospho-alpha-D-ribose 1-diphosphate + AMP + H(+). It functions in the pathway metabolic intermediate biosynthesis; 5-phospho-alpha-D-ribose 1-diphosphate biosynthesis; 5-phospho-alpha-D-ribose 1-diphosphate from D-ribose 5-phosphate (route I): step 1/1. In terms of biological role, involved in the biosynthesis of the central metabolite phospho-alpha-D-ribosyl-1-pyrophosphate (PRPP) via the transfer of pyrophosphoryl group from ATP to 1-hydroxyl of ribose-5-phosphate (Rib-5-P). The sequence is that of Ribose-phosphate pyrophosphokinase from Marinomonas sp. (strain MWYL1).